A 344-amino-acid polypeptide reads, in one-letter code: Dihydroorotase (344 aa).

The Zn(2+) site is built by His13 and His15. Residues 15 to 17 (HLR) and Asn41 contribute to the substrate site. 3 residues coordinate Zn(2+): Lys99, His136, and His174. Lys99 bears the N6-carboxylysine mark. Residue His136 coordinates substrate. Leu219 lines the substrate pocket. Asp247 contacts Zn(2+). Asp247 is an active-site residue. 2 residues coordinate substrate: His251 and Ala263.

This sequence belongs to the metallo-dependent hydrolases superfamily. DHOase family. Class II DHOase subfamily. In terms of assembly, homodimer. Requires Zn(2+) as cofactor.

The enzyme catalyses (S)-dihydroorotate + H2O = N-carbamoyl-L-aspartate + H(+). Its pathway is pyrimidine metabolism; UMP biosynthesis via de novo pathway; (S)-dihydroorotate from bicarbonate: step 3/3. Catalyzes the reversible cyclization of carbamoyl aspartate to dihydroorotate. The protein is Dihydroorotase of Acinetobacter baumannii (strain SDF).